Reading from the N-terminus, the 205-residue chain is Small ribosomal subunit protein uS4 (205 aa).

Positions 95-158 (SRLDNIVYRM…TKSPLVKNFI (64 aa)) constitute an S4 RNA-binding domain.

This sequence belongs to the universal ribosomal protein uS4 family. As to quaternary structure, part of the 30S ribosomal subunit. Contacts protein S5. The interaction surface between S4 and S5 is involved in control of translational fidelity.

In terms of biological role, one of the primary rRNA binding proteins, it binds directly to 16S rRNA where it nucleates assembly of the body of the 30S subunit. With S5 and S12 plays an important role in translational accuracy. In Mycoplasma genitalium (strain ATCC 33530 / DSM 19775 / NCTC 10195 / G37) (Mycoplasmoides genitalium), this protein is Small ribosomal subunit protein uS4.